The following is a 90-amino-acid chain: Sec-independent protein translocase protein TatA (90 aa).

A helical transmembrane segment spans residues 2 to 22; the sequence is GVGGISIWQLLIVLVIILLLF. Basic and acidic residues-rich tracts occupy residues 45–68 and 76–90; these read LRDE…HKAE and ADAD…DEHK. The disordered stretch occupies residues 45 to 90; that stretch reads LRDEERRDAEEAATIEHKQAHKAENPSQRQQADADFKIKSGNDEHK.

The protein belongs to the TatA/E family. The Tat system comprises two distinct complexes: a TatABC complex, containing multiple copies of TatA, TatB and TatC subunits, and a separate TatA complex, containing only TatA subunits. Substrates initially bind to the TatABC complex, which probably triggers association of the separate TatA complex to form the active translocon.

The protein resides in the cell inner membrane. Part of the twin-arginine translocation (Tat) system that transports large folded proteins containing a characteristic twin-arginine motif in their signal peptide across membranes. TatA could form the protein-conducting channel of the Tat system. The chain is Sec-independent protein translocase protein TatA from Nitrosococcus oceani (strain ATCC 19707 / BCRC 17464 / JCM 30415 / NCIMB 11848 / C-107).